The following is a 165-amino-acid chain: Lipoprotein signal peptidase (165 aa).

2 helical membrane-spanning segments follow: residues 68–88 (PLLPWLSFLVCLGLIGLGLFG) and 100–120 (GFLLGGAAGNGIDRIFLGEVI). Residues D121 and D137 contribute to the active site. Residues 130–150 (FPVFNIADISINVGLACLIFA) form a helical membrane-spanning segment.

Belongs to the peptidase A8 family.

The protein resides in the cell inner membrane. It carries out the reaction Release of signal peptides from bacterial membrane prolipoproteins. Hydrolyzes -Xaa-Yaa-Zaa-|-(S,diacylglyceryl)Cys-, in which Xaa is hydrophobic (preferably Leu), and Yaa (Ala or Ser) and Zaa (Gly or Ala) have small, neutral side chains.. It functions in the pathway protein modification; lipoprotein biosynthesis (signal peptide cleavage). Its function is as follows. This protein specifically catalyzes the removal of signal peptides from prolipoproteins. The polypeptide is Lipoprotein signal peptidase (Acaryochloris marina (strain MBIC 11017)).